We begin with the raw amino-acid sequence, 493 residues long: Cytochrome P450 710A4 (493 aa).

A helical membrane pass occupies residues 5–25; the sequence is VSLFASLTPYLVSALLLFLLL. Cys-435 contributes to the heme binding site.

The protein belongs to the cytochrome P450 family. The cofactor is heme. As to expression, very weak expression in roots and root hairs. Not detected in the root tips.

The protein localises to the membrane. The enzyme catalyses 5-dehydroepisterol + NADPH + O2 + H(+) = ergosta-5,7,22,24(28)-tetraen-3beta-ol + NADP(+) + 2 H2O. The protein operates within steroid biosynthesis; sterol biosynthesis. Functionally, required to form the C-22 double bond in the sterol side chain. Possesses C-22 desaturase activity toward beta-sitosterol and produces stigmasterol. This Arabidopsis thaliana (Mouse-ear cress) protein is Cytochrome P450 710A4.